We begin with the raw amino-acid sequence, 292 residues long: ATP synthase gamma chain (292 aa).

This sequence belongs to the ATPase gamma chain family. As to quaternary structure, F-type ATPases have 2 components, CF(1) - the catalytic core - and CF(0) - the membrane proton channel. CF(1) has five subunits: alpha(3), beta(3), gamma(1), delta(1), epsilon(1). CF(0) has three main subunits: a, b and c.

It is found in the cell membrane. Produces ATP from ADP in the presence of a proton gradient across the membrane. The gamma chain is believed to be important in regulating ATPase activity and the flow of protons through the CF(0) complex. The polypeptide is ATP synthase gamma chain (Streptococcus mutans serotype c (strain ATCC 700610 / UA159)).